The sequence spans 347 residues: Aspartate carbamoyltransferase catalytic subunit (347 aa).

Residues Arg75 and Thr76 each contribute to the carbamoyl phosphate site. Lys103 is a binding site for L-aspartate. 3 residues coordinate carbamoyl phosphate: Arg125, His153, and Gln156. The L-aspartate site is built by Arg193 and Arg247. Residues Gly288 and Pro289 each contribute to the carbamoyl phosphate site.

This sequence belongs to the aspartate/ornithine carbamoyltransferase superfamily. ATCase family. As to quaternary structure, heterododecamer (2C3:3R2) of six catalytic PyrB chains organized as two trimers (C3), and six regulatory PyrI chains organized as three dimers (R2).

The enzyme catalyses carbamoyl phosphate + L-aspartate = N-carbamoyl-L-aspartate + phosphate + H(+). It functions in the pathway pyrimidine metabolism; UMP biosynthesis via de novo pathway; (S)-dihydroorotate from bicarbonate: step 2/3. Catalyzes the condensation of carbamoyl phosphate and aspartate to form carbamoyl aspartate and inorganic phosphate, the committed step in the de novo pyrimidine nucleotide biosynthesis pathway. The polypeptide is Aspartate carbamoyltransferase catalytic subunit (Erythrobacter litoralis (strain HTCC2594)).